The primary structure comprises 504 residues: Lysine--tRNA ligase (504 aa).

Mg(2+)-binding residues include glutamate 411 and glutamate 418.

This sequence belongs to the class-II aminoacyl-tRNA synthetase family. As to quaternary structure, homodimer. It depends on Mg(2+) as a cofactor.

Its subcellular location is the cytoplasm. The catalysed reaction is tRNA(Lys) + L-lysine + ATP = L-lysyl-tRNA(Lys) + AMP + diphosphate. The polypeptide is Lysine--tRNA ligase (Clostridium botulinum (strain ATCC 19397 / Type A)).